We begin with the raw amino-acid sequence, 932 residues long: Lon protease homolog 2, peroxisomal (932 aa).

The 249-residue stretch at L11–V259 folds into the Lon N-terminal domain. Residues T304–P340 form a disordered region. A compositionally biased stretch (basic and acidic residues) spans E328 to P340. G486–T493 lines the ATP pocket. One can recognise a Lon proteolytic domain in the interval H729 to G916. Residues S822 and K865 contribute to the active site. The short motif at S930 to L932 is the Microbody targeting signal element.

The protein belongs to the peptidase S16 family.

The protein resides in the peroxisome matrix. It carries out the reaction Hydrolysis of proteins in presence of ATP.. ATP-dependent serine protease that mediates the selective degradation of misfolded and unassembled polypeptides in the peroxisomal matrix. Necessary for type 2 peroxisome targeting signal (PTS2)-containing protein processing and facilitates peroxisome matrix protein import. The protein is Lon protease homolog 2, peroxisomal of Aspergillus fumigatus (strain ATCC MYA-4609 / CBS 101355 / FGSC A1100 / Af293) (Neosartorya fumigata).